Reading from the N-terminus, the 202-residue chain is Protein-methionine-sulfoxide reductase heme-binding subunit MsrQ (202 aa).

6 helical membrane-spanning segments follow: residues 8 to 28 (LAVF…AWIF), 42 to 62 (LGLG…LQKL), 75 to 95 (LGLW…VFIL), 110 to 130 (PYII…ITSN), 147 to 167 (LVYL…RADL), and 169 to 189 (EWTL…PSIA).

The protein belongs to the MsrQ family. Heterodimer of a catalytic subunit (MsrP) and a heme-binding subunit (MsrQ). FMN serves as cofactor. It depends on heme b as a cofactor.

It localises to the cell inner membrane. In terms of biological role, part of the MsrPQ system that repairs oxidized periplasmic proteins containing methionine sulfoxide residues (Met-O), using respiratory chain electrons. Thus protects these proteins from oxidative-stress damage caused by reactive species of oxygen and chlorine generated by the host defense mechanisms. MsrPQ is essential for the maintenance of envelope integrity under bleach stress, rescuing a wide series of structurally unrelated periplasmic proteins from methionine oxidation. MsrQ provides electrons for reduction to the reductase catalytic subunit MsrP, using the quinone pool of the respiratory chain. This is Protein-methionine-sulfoxide reductase heme-binding subunit MsrQ from Pseudomonas paraeruginosa (strain DSM 24068 / PA7) (Pseudomonas aeruginosa (strain PA7)).